We begin with the raw amino-acid sequence, 465 residues long: Mothers against decapentaplegic homolog 1 (465 aa).

An N-acetylmethionine modification is found at methionine 1. The 125-residue stretch at 12–136 folds into the MH1 domain; the sequence is PAVKRLLGWK…YKRVESPVLP (125 aa). Residues cysteine 64, cysteine 109, cysteine 121, and histidine 126 each contribute to the Zn(2+) site. Residues 162-249 form a disordered region; that stretch reads NEPHMPLNAT…QPMDTNMMAP (88 aa). Over residues 179 to 210 the composition is skewed to low complexity; it reads PNSHPFPHSPNSSYPNSPGSSSSTYPHSPTSS. Residues 221 to 232 are compositionally biased toward pro residues; sequence DTPPPAYLPPED. The region spanning 271–465 is the MH2 domain; the sequence is WCSIVYYELN…SPHNPISSVS (195 aa). Threonine 322 bears the Phosphothreonine; by MINK1, TNIK and MAP4K4 mark. The segment at 418–428 is L3 loop; the sequence is KGWGAEYHRQD. Phosphoserine is present on residues serine 463 and serine 465.

Belongs to the dwarfin/SMAD family. In terms of assembly, found in a complex with SMAD4 and YY1. Interacts with HGS, NANOG and ZCCHC12. Upon C-terminus phosphorylation: forms trimers with another SMAD1 and the co-SMAD SMAD4. Interacts with PEBP2-alpha subunit, CREB-binding protein (CBP), p300, SMURF1, SMURF2, USP15 and HOXC8. Associates with ZNF423 or ZNF521 in response to BMP2 leading to activate transcription of BMP target genes. Interacts with SKOR1. Interacts (via MH2 domain) with LEMD3. Binding to LEMD3 results in at least a partial reduction of receptor-mediated phosphorylation. Forms a ternary complex with PSMB4 and OAZ1 before PSMB4 is incorporated into the 20S proteasome. Interacts (via MH2 domain) with FAM83G (via MH2 domain); in a SMAD4-independent manner. Interacts with ZC3H3. Interacts with TMEM119. Interacts (via MH1 and MH2 domains) with ZNF8. Interacts with RANBP3L; the interaction increases when SMAD1 is not phosphorylated and mediates SMAD1 nuclear export. Interacts with EGR1; this interaction inhibits SMAD1 dephosphorylation. Interacts with SMAD6. Interacts with YAP1. Interacts with MTMR4; negatively regulates BMP signaling through SMAD1 dephosphorylation and retention in endosomes. Phosphorylation of the C-terminal SVS motif by BMP type 1 receptor kinase activates SMAD1 by promoting dissociation from the receptor and trimerization with SMAD4. Phosphorylation by ERK2 MAP kinase in response to EGF or HGF prevents SMAD1 nuclear accumulation and transcriptional activity in response to BMP. Dephosphorylation, probably by PPM1A, induces its export from the nucleus to the cytoplasm. Dephosphorylation is inhibited by association with EGR1. Phosphorylation by CDK8/9 creates binding sites for YAP1, and subsequent phosphorylation by GSK3 switches off YAP1 binding and adds binding sites for SMURF1. Post-translationally, ubiquitinated by SMAD-specific E3 ubiquitin ligase SMURF1, leading to its degradation. Monoubiquitinated, leading to prevent DNA-binding. Deubiquitination by USP15 alleviates inhibition and promotes activation of TGF-beta target genes. Dephosphorylation, probably by PPM1A, induces its export from the nucleus to the cytoplasm. Phospho-SMAD1 is ubiquitinated by CHIP leading to disruption of the SMAD1-SMAD4 complex.

The protein resides in the cytoplasm. It localises to the nucleus. In terms of biological role, transcriptional modulator that plays a role in various cellular processes, including embryonic development, cell differentiation, and tissue homeostasis. Upon BMP ligand binding to their receptors at the cell surface, is phosphorylated by activated type I BMP receptors (BMPRIs) and associates with SMAD4 to form an heteromeric complex which translocates into the nucleus acting as transcription factor. In turn, the hetero-trimeric complex recognizes cis-regulatory elements containing Smad Binding Elements (SBEs) to modulate the outcome of the signaling network. SMAD1/OAZ1/PSMB4 complex mediates the degradation of the CREBBP/EP300 repressor SNIP1. Positively regulates BMP4-induced expression of odontogenic development regulator MSX1 following IPO7-mediated nuclear import. This chain is Mothers against decapentaplegic homolog 1 (SMAD1), found in Bos taurus (Bovine).